Reading from the N-terminus, the 595-residue chain is Putative histone-lysine N-methyltransferase PRDM6 (595 aa).

Residues 27–90 (FPHGGAGPLK…STPASSSTSA (64 aa)) are disordered. A compositionally biased stretch (gly residues) spans 30–40 (GGAGPLKGSGA). The span at 49 to 59 (PLQPPPPPPPP) shows a compositional bias: pro residues. Over residues 71–90 (PRPASLSSASSTPASSSTSA) the composition is skewed to low complexity. An SET domain is found at 246–365 (REVCLCTSTV…RGTELLVWYN (120 aa)). The C2H2-type 1; degenerate zinc finger occupies 473-495 (WKCGQCFKTFTQRILLQMHVCTQ). 2 C2H2-type zinc fingers span residues 501–523 (YQCG…VVTH) and 529–551 (FKCG…IRTH). Residues 557–579 (FKCERCERSFTQATQLSRHQRMP) form a C2H2-type 4; degenerate zinc finger.

It belongs to the class V-like SAM-binding methyltransferase superfamily. Interacts with HDAC1, HDAC2, HDAC3, CBX1 and EP300.

It is found in the nucleus. It catalyses the reaction L-lysyl(20)-[histone H4] + S-adenosyl-L-methionine = N(6)-methyl-L-lysyl(20)-[histone H4] + S-adenosyl-L-homocysteine + H(+). Functionally, putative histone methyltransferase that acts as a transcriptional repressor of smooth muscle gene expression. Promotes the transition from differentiated to proliferative smooth muscle by suppressing differentiation and maintaining the proliferative potential of vascular smooth muscle cells. Also plays a role in endothelial cells by inhibiting endothelial cell proliferation, survival and differentiation. It is unclear whether it has histone methyltransferase activity in vivo. According to some authors, it does not act as a histone methyltransferase by itself and represses transcription by recruiting EHMT2/G9a. According to others, it possesses histone methyltransferase activity when associated with other proteins and specifically methylates 'Lys-20' of histone H4 in vitro. 'Lys-20' methylation represents a specific tag for epigenetic transcriptional repression. This chain is Putative histone-lysine N-methyltransferase PRDM6 (PRDM6), found in Homo sapiens (Human).